We begin with the raw amino-acid sequence, 242 residues long: Guanylate kinase (242 aa).

Residues 22–200 (GLLIVMTGAS…AVRELQAVQR (179 aa)) enclose the Guanylate kinase-like domain. 29-36 (GASGVGKG) serves as a coordination point for ATP.

The protein belongs to the guanylate kinase family.

It is found in the cytoplasm. The catalysed reaction is GMP + ATP = GDP + ADP. Its function is as follows. Essential for recycling GMP and indirectly, cGMP. This is Guanylate kinase from Deinococcus geothermalis (strain DSM 11300 / CIP 105573 / AG-3a).